The primary structure comprises 116 residues: UPF0127 protein PF1050 (116 aa).

The protein belongs to the UPF0127 family.

The protein is UPF0127 protein PF1050 of Pyrococcus furiosus (strain ATCC 43587 / DSM 3638 / JCM 8422 / Vc1).